A 359-amino-acid chain; its full sequence is 3-dehydroquinate synthase (359 aa).

Residues 71 to 76 (DGEQYK), 105 to 109 (GVIGD), 129 to 130 (TT), lysine 142, lysine 151, and 169 to 172 (CLST) each bind NAD(+). 3 residues coordinate Zn(2+): glutamate 184, histidine 247, and histidine 264.

It belongs to the sugar phosphate cyclases superfamily. Dehydroquinate synthase family. Requires Co(2+) as cofactor. The cofactor is Zn(2+). It depends on NAD(+) as a cofactor.

Its subcellular location is the cytoplasm. It carries out the reaction 7-phospho-2-dehydro-3-deoxy-D-arabino-heptonate = 3-dehydroquinate + phosphate. Its pathway is metabolic intermediate biosynthesis; chorismate biosynthesis; chorismate from D-erythrose 4-phosphate and phosphoenolpyruvate: step 2/7. Functionally, catalyzes the conversion of 3-deoxy-D-arabino-heptulosonate 7-phosphate (DAHP) to dehydroquinate (DHQ). The polypeptide is 3-dehydroquinate synthase (Shewanella piezotolerans (strain WP3 / JCM 13877)).